We begin with the raw amino-acid sequence, 726 residues long: Catalase-peroxidase (726 aa).

Positions 93 to 216 form a cross-link, tryptophyl-tyrosyl-methioninium (Trp-Tyr) (with M-242); it reads WHSAGTYRVH…LAAVQMGLIY (124 aa). His-94 acts as the Proton acceptor in catalysis. Positions 216-242 form a cross-link, tryptophyl-tyrosyl-methioninium (Tyr-Met) (with W-93); sequence YVNPEGPNGNPDPVAAAVDIRETFTRM. His-257 serves as a coordination point for heme b. The interval 471 to 490 is disordered; it reads GSDKRGGANGARIRLSPQKD.

The protein belongs to the peroxidase family. Peroxidase/catalase subfamily. As to quaternary structure, homodimer or homotetramer. Requires heme b as cofactor. In terms of processing, formation of the three residue Trp-Tyr-Met cross-link is important for the catalase, but not the peroxidase activity of the enzyme.

It catalyses the reaction H2O2 + AH2 = A + 2 H2O. The catalysed reaction is 2 H2O2 = O2 + 2 H2O. In terms of biological role, bifunctional enzyme with both catalase and broad-spectrum peroxidase activity. This Methylacidiphilum infernorum (isolate V4) (Methylokorus infernorum (strain V4)) protein is Catalase-peroxidase.